The primary structure comprises 594 residues: UvrABC system protein C (594 aa).

A GIY-YIG domain is found at 15–92 (DKPGCYQMKN…IQKFQPYYNI (78 aa)). Residues 197-232 (AKIKQSLQTKMQKASEAMEFERAADIRDQIHYIEVT) form the UVR domain.

This sequence belongs to the UvrC family. As to quaternary structure, interacts with UvrB in an incision complex.

It localises to the cytoplasm. In terms of biological role, the UvrABC repair system catalyzes the recognition and processing of DNA lesions. UvrC both incises the 5' and 3' sides of the lesion. The N-terminal half is responsible for the 3' incision and the C-terminal half is responsible for the 5' incision. This is UvrABC system protein C from Pediococcus pentosaceus (strain ATCC 25745 / CCUG 21536 / LMG 10740 / 183-1w).